The sequence spans 122 residues: Large ribosomal subunit protein uL14 (122 aa).

The protein belongs to the universal ribosomal protein uL14 family. Part of the 50S ribosomal subunit. Forms a cluster with proteins L3 and L19. In the 70S ribosome, L14 and L19 interact and together make contacts with the 16S rRNA in bridges B5 and B8.

Its function is as follows. Binds to 23S rRNA. Forms part of two intersubunit bridges in the 70S ribosome. This is Large ribosomal subunit protein uL14 from Campylobacter hominis (strain ATCC BAA-381 / DSM 21671 / CCUG 45161 / LMG 19568 / NCTC 13146 / CH001A).